Consider the following 314-residue polypeptide: Ribose-phosphate pyrophosphokinase (314 aa).

ATP-binding positions include 37–39 and 96–97; these read DGE and RQ. Positions 131 and 170 each coordinate Mg(2+). The active site involves lysine 194. D-ribose 5-phosphate-binding positions include arginine 196, aspartate 220, and 224 to 228; that span reads DTGGT.

This sequence belongs to the ribose-phosphate pyrophosphokinase family. Class I subfamily. As to quaternary structure, homohexamer. Mg(2+) serves as cofactor.

The protein resides in the cytoplasm. The catalysed reaction is D-ribose 5-phosphate + ATP = 5-phospho-alpha-D-ribose 1-diphosphate + AMP + H(+). Its pathway is metabolic intermediate biosynthesis; 5-phospho-alpha-D-ribose 1-diphosphate biosynthesis; 5-phospho-alpha-D-ribose 1-diphosphate from D-ribose 5-phosphate (route I): step 1/1. In terms of biological role, involved in the biosynthesis of the central metabolite phospho-alpha-D-ribosyl-1-pyrophosphate (PRPP) via the transfer of pyrophosphoryl group from ATP to 1-hydroxyl of ribose-5-phosphate (Rib-5-P). The sequence is that of Ribose-phosphate pyrophosphokinase from Vibrio parahaemolyticus serotype O3:K6 (strain RIMD 2210633).